The primary structure comprises 208 residues: Small ribosomal subunit protein uS4 (208 aa).

In terms of domain architecture, S4 RNA-binding spans 98 to 158 (RRLDNVVYRL…EKSRGQLRIK (61 aa)).

It belongs to the universal ribosomal protein uS4 family. As to quaternary structure, part of the 30S ribosomal subunit. Contacts protein S5. The interaction surface between S4 and S5 is involved in control of translational fidelity.

In terms of biological role, one of the primary rRNA binding proteins, it binds directly to 16S rRNA where it nucleates assembly of the body of the 30S subunit. With S5 and S12 plays an important role in translational accuracy. The protein is Small ribosomal subunit protein uS4 of Magnetococcus marinus (strain ATCC BAA-1437 / JCM 17883 / MC-1).